A 1312-amino-acid polypeptide reads, in one-letter code: uncharacterized protein (1312 aa).

The N-terminal stretch at 1-20 is a signal peptide; that stretch reads MRNNLIYTMFLSCLHFETFC. Residues 299–344 show a composition bias toward low complexity; it reads TTTSSSTMLSSTTLLTTETETRESSSTGSTQTTTPSTEPSTTITTP. Disordered stretches follow at residues 299–503, 565–609, 645–692, 749–775, 812–864, 899–942, 1048–1079, and 1114–1165; these read TTTS…TTTY, EITS…PTGG, KETR…PTGG, SSSSKFSITPTPTPSSGTTTYNWPTGG, KTRT…GGTT, KTRT…PTGG, KTRTETTSDAQGCKATSTTQTPTTFNWPTGGT, and NTTR…TLET. Polar residues predominate over residues 345–357; the sequence is MEQSSTVSSVQKT. Residues 365-503 show a composition bias toward low complexity; sequence SSSTTVPTSA…STPATPTTTY (139 aa). The segment covering 565–574 has biased composition (basic and acidic residues); it reads EITSDAEGCK. The span at 576–609 shows a compositional bias: low complexity; it reads TSSTPTPSSTSVHSTTATPSTTPGTTTYNWPTGG. The span at 645 to 659 shows a compositional bias: basic and acidic residues; the sequence is KETRTETTTDADGCK. Positions 660-692 are enriched in low complexity; sequence KTSSTSSSTPSLKHSTTPTPTPGTTTYNWPTGG. Basic and acidic residues predominate over residues 813 to 825; it reads TRTETTTDAEGCK. Residues 826–864 are compositionally biased toward low complexity; that stretch reads KTSSTSKISTTPTSPTSSKPTPTSTSMTTTYNWPTGGTT. Polar residues predominate over residues 899 to 908; the sequence is KTRTETTTDA. A compositionally biased stretch (low complexity) spans 914–942; sequence TSSTSLKPTSPSSSTASPPTTTYNWPTGG. Residues 1048-1057 show a composition bias toward polar residues; that stretch reads KTRTETTSDA. Low complexity predominate over residues 1063–1076; sequence TSTTQTPTTFNWPT. Residues 1114 to 1123 show a composition bias toward polar residues; it reads NTTRTETTSD. Residues 1130–1154 are compositionally biased toward low complexity; it reads TSSGTTSTMSPGTTGGTTVSRTTNS. Residues 1155-1164 are compositionally biased toward polar residues; sequence NNPIDSSTLE. Residues 1239 to 1306 enclose the Sushi domain; the sequence is ATCSSLNLNL…WSGTPEKCVA (68 aa). 2 disulfide bridges follow: cysteine 1241–cysteine 1291 and cysteine 1273–cysteine 1304.

The protein resides in the secreted. This is an uncharacterized protein from Caenorhabditis elegans.